We begin with the raw amino-acid sequence, 548 residues long: Natural resistance-associated macrophage protein 1 (548 aa).

The disordered stretch occupies residues Met-1–Glu-38. Topologically, residues Met-1 to Leu-55 are cytoplasmic. The helical transmembrane segment at Trp-56–Gly-73 threads the bilayer. Residues Asn-74 to Gly-82 lie on the Extracellular side of the membrane. Residues Ala-83–Leu-102 traverse the membrane as a helical segment. Residues Cys-103 to Glu-139 lie on the Cytoplasmic side of the membrane. A helical transmembrane segment spans residues Leu-140–Leu-160. Over Ser-161–Arg-164 the chain is Extracellular. The chain crosses the membrane as a helical span at residues Ile-165–Leu-184. Residues Asp-185–Glu-193 are Cytoplasmic-facing. A helical transmembrane segment spans residues Ala-194–Ala-214. Residues Gln-215–Glu-237 are Extracellular-facing. A helical transmembrane segment spans residues Leu-238 to Leu-256. The Cytoplasmic segment spans residues His-257–Glu-284. A helical membrane pass occupies residues Ala-285–Gly-304. The Extracellular portion of the chain corresponds to Gln-305–Gly-346. N-linked (GlcNAc...) asparagine glycosylation is found at Asn-321 and Asn-335. The helical transmembrane segment at Val-347–Leu-366 threads the bilayer. Over Ala-367 to Arg-397 the chain is Cytoplasmic. Residues Val-398–Phe-415 form a helical membrane-spanning segment. At Arg-416–Asp-426 the chain is on the extracellular side. The chain crosses the membrane as a helical span at residues Leu-427 to Thr-447. The Cytoplasmic portion of the chain corresponds to Ser-448–Lys-463. A helical transmembrane segment spans residues Val-464–Val-485. Over Pro-486–Tyr-493 the chain is Extracellular. A helical transmembrane segment spans residues Phe-494–Trp-513. The Cytoplasmic portion of the chain corresponds to Thr-514–Gly-548.

Belongs to the NRAMP family.

It localises to the late endosome membrane. It is found in the lysosome membrane. It catalyses the reaction Zn(2+)(in) + H(+)(out) = Zn(2+)(out) + H(+)(in). The catalysed reaction is Fe(2+)(in) + H(+)(out) = Fe(2+)(out) + H(+)(in). It carries out the reaction Mn(2+)(in) + H(+)(out) = Mn(2+)(out) + H(+)(in). Functionally, macrophage-specific antiporter that fluxes metal ions in either direction against a proton gradient. Localized to late endosomal lysosomal membranes, delivers bivalent cations from the cytosol into these acidic compartments where they may directly affect antimicrobial activity. Involved in iron metabolism and host natural resistance to infection with intracellular parasites. Pathogen resistance involves sequestration of Fe(2+) and Mn(2+), cofactors of both prokaryotic and eukaryotic catalases and superoxide dismutases, not only to protect the macrophage against its own generation of reactive oxygen species, but to deny the cations to the pathogen for synthesis of its protective enzymes. The polypeptide is Natural resistance-associated macrophage protein 1 (SLC11A1) (Bison bison (American bison)).